Consider the following 338-residue polypeptide: Ketol-acid reductoisomerase (NADP(+)) (338 aa).

The KARI N-terminal Rossmann domain occupies 1–181 (MNVFYDKDAD…GGGRAGIIET (181 aa)). NADP(+) is bound by residues 24–27 (YGSQ), arginine 47, and serine 52. Histidine 107 is a catalytic residue. Glycine 133 provides a ligand contact to NADP(+). The KARI C-terminal knotted domain maps to 182–327 (NFREETETDL…AKLRAMMPWI (146 aa)). Residues aspartate 190, glutamate 194, glutamate 226, and glutamate 230 each coordinate Mg(2+). A substrate-binding site is contributed by serine 251.

It belongs to the ketol-acid reductoisomerase family. Mg(2+) is required as a cofactor.

It carries out the reaction (2R)-2,3-dihydroxy-3-methylbutanoate + NADP(+) = (2S)-2-acetolactate + NADPH + H(+). The catalysed reaction is (2R,3R)-2,3-dihydroxy-3-methylpentanoate + NADP(+) = (S)-2-ethyl-2-hydroxy-3-oxobutanoate + NADPH + H(+). The protein operates within amino-acid biosynthesis; L-isoleucine biosynthesis; L-isoleucine from 2-oxobutanoate: step 2/4. Its pathway is amino-acid biosynthesis; L-valine biosynthesis; L-valine from pyruvate: step 2/4. Functionally, involved in the biosynthesis of branched-chain amino acids (BCAA). Catalyzes an alkyl-migration followed by a ketol-acid reduction of (S)-2-acetolactate (S2AL) to yield (R)-2,3-dihydroxy-isovalerate. In the isomerase reaction, S2AL is rearranged via a Mg-dependent methyl migration to produce 3-hydroxy-3-methyl-2-ketobutyrate (HMKB). In the reductase reaction, this 2-ketoacid undergoes a metal-dependent reduction by NADPH to yield (R)-2,3-dihydroxy-isovalerate. The sequence is that of Ketol-acid reductoisomerase (NADP(+)) from Burkholderia multivorans (strain ATCC 17616 / 249).